Consider the following 341-residue polypeptide: Phenylalanine--tRNA ligase alpha subunit (341 aa).

Glu-259 lines the Mg(2+) pocket.

The protein belongs to the class-II aminoacyl-tRNA synthetase family. Phe-tRNA synthetase alpha subunit type 1 subfamily. Tetramer of two alpha and two beta subunits. Requires Mg(2+) as cofactor.

Its subcellular location is the cytoplasm. It carries out the reaction tRNA(Phe) + L-phenylalanine + ATP = L-phenylalanyl-tRNA(Phe) + AMP + diphosphate + H(+). This is Phenylalanine--tRNA ligase alpha subunit from Mycobacterium bovis (strain ATCC BAA-935 / AF2122/97).